An 84-amino-acid chain; its full sequence is HPTKPCMYCSFGQCVGPHICCGPTGCEMGTAEANMCSEEDEDPIPCQVFGSDCALNNPDNIHGHCVADGICCVDDTCTTHLGCL.

7 cysteine pairs are disulfide-bonded: cysteine 6/cysteine 46, cysteine 9/cysteine 20, cysteine 14/cysteine 36, cysteine 21/cysteine 26, cysteine 53/cysteine 71, cysteine 65/cysteine 83, and cysteine 72/cysteine 77.

As to expression, expressed by the venom duct.

It is found in the secreted. Its function is as follows. Targets vasopressin-oxytocin related receptors. No effect observed when injected into goldfish or into mice. This chain is Conophysin-R, found in Conus radiatus (Rayed cone).